The chain runs to 352 residues: Chorismate synthase (352 aa).

Positions 48 and 54 each coordinate NADP(+). Residues 125 to 127 (RSS), 238 to 239 (NA), glycine 278, 293 to 297 (KPTSS), and arginine 319 each bind FMN.

This sequence belongs to the chorismate synthase family. As to quaternary structure, homotetramer. The cofactor is FMNH2.

The catalysed reaction is 5-O-(1-carboxyvinyl)-3-phosphoshikimate = chorismate + phosphate. It functions in the pathway metabolic intermediate biosynthesis; chorismate biosynthesis; chorismate from D-erythrose 4-phosphate and phosphoenolpyruvate: step 7/7. In terms of biological role, catalyzes the anti-1,4-elimination of the C-3 phosphate and the C-6 proR hydrogen from 5-enolpyruvylshikimate-3-phosphate (EPSP) to yield chorismate, which is the branch point compound that serves as the starting substrate for the three terminal pathways of aromatic amino acid biosynthesis. This reaction introduces a second double bond into the aromatic ring system. The sequence is that of Chorismate synthase from Bordetella avium (strain 197N).